A 115-amino-acid polypeptide reads, in one-letter code: NADH-ubiquinone oxidoreductase chain 3 (115 aa).

The next 3 membrane-spanning stretches (helical) occupy residues 3–23 (LMIT…IAFW), 55–75 (FFLV…LLPL), and 84–104 (LNTM…SLAY).

It belongs to the complex I subunit 3 family. In terms of assembly, core subunit of respiratory chain NADH dehydrogenase (Complex I) which is composed of 45 different subunits. Interacts with TMEM186. Interacts with TMEM242.

It is found in the mitochondrion inner membrane. It carries out the reaction a ubiquinone + NADH + 5 H(+)(in) = a ubiquinol + NAD(+) + 4 H(+)(out). Its function is as follows. Core subunit of the mitochondrial membrane respiratory chain NADH dehydrogenase (Complex I) which catalyzes electron transfer from NADH through the respiratory chain, using ubiquinone as an electron acceptor. Essential for the catalytic activity of complex I. This is NADH-ubiquinone oxidoreductase chain 3 from Ovis aries (Sheep).